Consider the following 108-residue polypeptide: BH3-like motif-containing cell death inducer (108 aa).

The short motif at 5–12 (LPIEGQEI) is the BH3-like element.

In terms of tissue distribution, ubiquitously expressed.

The protein resides in the cytoplasm. It is found in the mitochondrion. Functionally, functions as a proapoptotic molecule through the caspase-dependent mitochondrial pathway of cell death. This chain is BH3-like motif-containing cell death inducer (BLID), found in Homo sapiens (Human).